The following is a 303-amino-acid chain: Ribonuclease HIII (303 aa).

The RNase H type-2 domain occupies cysteine 85 to lysine 302. Aspartate 91, glutamate 92, and aspartate 196 together coordinate a divalent metal cation.

It belongs to the RNase HII family. RnhC subfamily. It depends on Mn(2+) as a cofactor. The cofactor is Mg(2+).

The protein localises to the cytoplasm. It catalyses the reaction Endonucleolytic cleavage to 5'-phosphomonoester.. In terms of biological role, endonuclease that specifically degrades the RNA of RNA-DNA hybrids. The sequence is that of Ribonuclease HIII from Streptococcus mutans serotype c (strain ATCC 700610 / UA159).